The primary structure comprises 713 residues: Polyribonucleotide nucleotidyltransferase (713 aa).

Residues Asp-495 and Asp-501 each coordinate Mg(2+). Residues 562–621 form the KH domain; the sequence is PRLLTLKIPVDMIGLVIGPGGKTIKRIVEETGAKVDIEDDGTVVVSSIDGAKALAAKQII. In terms of domain architecture, S1 motif spans 631–700; it reads DKVYLGTVTR…QKGRINLTRR (70 aa).

It belongs to the polyribonucleotide nucleotidyltransferase family. Mg(2+) serves as cofactor.

It localises to the cytoplasm. It catalyses the reaction RNA(n+1) + phosphate = RNA(n) + a ribonucleoside 5'-diphosphate. Its function is as follows. Involved in mRNA degradation. Catalyzes the phosphorolysis of single-stranded polyribonucleotides processively in the 3'- to 5'-direction. This Gloeobacter violaceus (strain ATCC 29082 / PCC 7421) protein is Polyribonucleotide nucleotidyltransferase.